Here is a 498-residue protein sequence, read N- to C-terminus: ATP synthase subunit beta, chloroplastic (498 aa).

172 to 179 contacts ATP; sequence GGAGVGKT.

This sequence belongs to the ATPase alpha/beta chains family. F-type ATPases have 2 components, CF(1) - the catalytic core - and CF(0) - the membrane proton channel. CF(1) has five subunits: alpha(3), beta(3), gamma(1), delta(1), epsilon(1). CF(0) has four main subunits: a(1), b(1), b'(1) and c(9-12).

The protein localises to the plastid. Its subcellular location is the chloroplast thylakoid membrane. It carries out the reaction ATP + H2O + 4 H(+)(in) = ADP + phosphate + 5 H(+)(out). Its function is as follows. Produces ATP from ADP in the presence of a proton gradient across the membrane. The catalytic sites are hosted primarily by the beta subunits. This chain is ATP synthase subunit beta, chloroplastic, found in Drimys granadensis.